The chain runs to 473 residues: MAPRTMYDKIWDAHLVEMAEDGTGLLYIDRHLVHEVTSPQAFEGLRMAKRQVHAPQKTLAVADHNVPTTDRSKGIADEESRIQVETLEHNAQDFGVEYLQMSDIRQGIVHIVGPEQGFTLPGTTIVCGDSHTSTHGAFGALAHGIGTSEVEHVLATQTLIQSKAKNMRINVVGKAPEGFTAKDIVLAIIGEIGTAGGTGYVIEYAGEAIRDLSMEGRMTVCNMTIEGGARAGLIAPDDKTYAYLEGRPRAPKGKAWEMAVEYWKTLPSDPDAKFDKEITIDIANLPPLITWGTSPENVIKITDRIPDPKDVADPSHAKSMQRALDYMGLTPGTPINEVKIDRVFIGSCTNGRIEDLRAAAVIAEKAIKAGRKVASTVNAMVVPGSGLVKEQAEKEGLDKIFLEAGFEWREPGCSMCLAMNADKLAPGERCASTSNRNFEGRQGRGGRTHLVSPAMAVAAAIEGHFTDVREFGN.

Cys-348, Cys-413, and Cys-416 together coordinate [4Fe-4S] cluster.

Belongs to the aconitase/IPM isomerase family. LeuC type 1 subfamily. Heterodimer of LeuC and LeuD. The cofactor is [4Fe-4S] cluster.

It carries out the reaction (2R,3S)-3-isopropylmalate = (2S)-2-isopropylmalate. It functions in the pathway amino-acid biosynthesis; L-leucine biosynthesis; L-leucine from 3-methyl-2-oxobutanoate: step 2/4. Catalyzes the isomerization between 2-isopropylmalate and 3-isopropylmalate, via the formation of 2-isopropylmaleate. The sequence is that of 3-isopropylmalate dehydratase large subunit from Parvibaculum lavamentivorans (strain DS-1 / DSM 13023 / NCIMB 13966).